The sequence spans 216 residues: Uracil phosphoribosyltransferase (216 aa).

Residues R84, R109, and 137-145 (DPMLATGNT) each bind 5-phospho-alpha-D-ribose 1-diphosphate. Uracil contacts are provided by residues I202 and 207 to 209 (GDA). Position 208 (D208) interacts with 5-phospho-alpha-D-ribose 1-diphosphate.

Belongs to the UPRTase family. Requires Mg(2+) as cofactor.

It carries out the reaction UMP + diphosphate = 5-phospho-alpha-D-ribose 1-diphosphate + uracil. The protein operates within pyrimidine metabolism; UMP biosynthesis via salvage pathway; UMP from uracil: step 1/1. With respect to regulation, allosterically activated by GTP. Its function is as follows. Catalyzes the conversion of uracil and 5-phospho-alpha-D-ribose 1-diphosphate (PRPP) to UMP and diphosphate. The chain is Uracil phosphoribosyltransferase from Synechocystis sp. (strain ATCC 27184 / PCC 6803 / Kazusa).